Here is a 378-residue protein sequence, read N- to C-terminus: Glutamate 5-kinase 1 (378 aa).

Residue Lys-13 participates in ATP binding. Substrate-binding residues include Ser-53, Asp-140, and Asn-152. 172–173 (SD) contacts ATP. The PUA domain occupies 278 to 355 (AGRLTVDAGA…AEIETVLGYE (78 aa)).

This sequence belongs to the glutamate 5-kinase family.

The protein localises to the cytoplasm. The enzyme catalyses L-glutamate + ATP = L-glutamyl 5-phosphate + ADP. The protein operates within amino-acid biosynthesis; L-proline biosynthesis; L-glutamate 5-semialdehyde from L-glutamate: step 1/2. Catalyzes the transfer of a phosphate group to glutamate to form L-glutamate 5-phosphate. In Mesorhizobium japonicum (strain LMG 29417 / CECT 9101 / MAFF 303099) (Mesorhizobium loti (strain MAFF 303099)), this protein is Glutamate 5-kinase 1.